A 338-amino-acid chain; its full sequence is Formimidoylglutamase (338 aa).

Histidine 137, aspartate 166, histidine 168, aspartate 170, cysteine 259, and aspartate 261 together coordinate Mn(2+).

The protein belongs to the arginase family. Requires Mn(2+) as cofactor.

It carries out the reaction N-formimidoyl-L-glutamate + H2O = formamide + L-glutamate. It participates in amino-acid degradation; L-histidine degradation into L-glutamate; L-glutamate from N-formimidoyl-L-glutamate (hydrolase route): step 1/1. Its function is as follows. Catalyzes the conversion of N-formimidoyl-L-glutamate to L-glutamate and formamide. This is Formimidoylglutamase from Clostridium tetani (strain Massachusetts / E88).